The chain runs to 347 residues: LRP2-binding protein (347 aa).

The TPR repeat unit spans residues 59 to 92 (TLAYFLRGQLYFEEGWYEEALEQFEEIKEKDHQA). Sel1-like repeat units follow at residues 93-125 (TYQLGVMYYDGLGTTLDAEKGVDYMKKILDSPC), 133-168 (FAAAYNLGRAYYEGKGVKRSNEEAERLWLIAADNGN), 173-206 (VKAQSMLGLYYSTKEPKELEKAFYWHSEACGNGN), 207-242 (LESQGALGLMYLYGQGIRQDTEAALQCLREAAERGN), 243-277 (VYAQGNLVEYYYKMKFFTKCVAFSKRIADYDEVHD), and 297-332 (AMASFYHARCLQLGLGITRDETTAKHYYSKACRLNP).

As to quaternary structure, interacts with LRP2.

It is found in the cytoplasm. Functionally, may act as an adapter that regulates LRP2 function. The sequence is that of LRP2-binding protein (LRP2BP) from Homo sapiens (Human).